A 326-amino-acid chain; its full sequence is ATP synthase gamma chain (326 aa).

Belongs to the ATPase gamma chain family. As to quaternary structure, F-type ATPases have 2 components, CF(1) - the catalytic core - and CF(0) - the membrane proton channel. CF(1) has five subunits: alpha(3), beta(3), gamma(1), delta(1), epsilon(1). CF(0) has three main subunits: a, b and c.

The protein localises to the cell membrane. Produces ATP from ADP in the presence of a proton gradient across the membrane. The gamma chain is believed to be important in regulating ATPase activity and the flow of protons through the CF(0) complex. This is ATP synthase gamma chain from Corynebacterium jeikeium (strain K411).